The chain runs to 179 residues: Exosome complex component Csl4 (179 aa).

An S1 motif domain is found at 58–137; the sequence is GDVVLGRVVD…RLSTKEEEMG (80 aa). Zn(2+) contacts are provided by Cys-143, Cys-146, Cys-159, and Cys-162.

This sequence belongs to the CSL4 family. In terms of assembly, component of the archaeal exosome complex. Forms a trimer of Rrp4 and/or Csl4 subunits. The trimer associates with a hexameric ring-like arrangement composed of 3 Rrp41-Rrp42 heterodimers. Interacts with DnaG.

The protein resides in the cytoplasm. Non-catalytic component of the exosome, which is a complex involved in RNA degradation. Increases the RNA binding and the efficiency of RNA degradation. Helpful for the interaction of the exosome with A-poor RNAs. This chain is Exosome complex component Csl4, found in Archaeoglobus fulgidus (strain ATCC 49558 / DSM 4304 / JCM 9628 / NBRC 100126 / VC-16).